The primary structure comprises 277 residues: MGIKVYKPTTNGRRNMTSLDFAEITTSTPEKSLLVSLKSKAGRNNNGRITVRHQGGGHKRHYRLIDFKRNKDGVEAVVKTIEYDPNRTANIALVHYTDGVKAYIIAPKGLEVGQRIVSGPDADIKVGNALPLANIPVGTVVHNIELKPGKGGELVRAAGASAQVLGQEGKYVLVRLQSGEVRMILGTCRATIGTVGNEQQSLVNIGKAGRSRWKGVRPTVRGSVMNPNDHPHGGGEGKAPVGRKAPSTPWGKPALGLKTRNKKAKSDKLIVRRRNEK.

The disordered stretch occupies residues 218 to 277 (PTVRGSVMNPNDHPHGGGEGKAPVGRKAPSTPWGKPALGLKTRNKKAKSDKLIVRRRNEK). Over residues 264–277 (AKSDKLIVRRRNEK) the composition is skewed to basic and acidic residues.

Belongs to the universal ribosomal protein uL2 family. In terms of assembly, part of the 50S ribosomal subunit. Forms a bridge to the 30S subunit in the 70S ribosome.

One of the primary rRNA binding proteins. Required for association of the 30S and 50S subunits to form the 70S ribosome, for tRNA binding and peptide bond formation. It has been suggested to have peptidyltransferase activity; this is somewhat controversial. Makes several contacts with the 16S rRNA in the 70S ribosome. The chain is Large ribosomal subunit protein uL2 from Streptococcus pyogenes serotype M4 (strain MGAS10750).